Reading from the N-terminus, the 528-residue chain is T-complex protein 1 subunit gamma (528 aa).

Position 250 is a phosphoserine (Ser-250). The cysteines at positions 364 and 370 are disulfide-linked.

The protein belongs to the TCP-1 chaperonin family. In terms of assembly, heterooligomeric complex of about 850 to 900 kDa that forms two stacked rings, 12 to 16 nm in diameter.

Its subcellular location is the cytoplasm. Molecular chaperone; assists the folding of proteins upon ATP hydrolysis. Known to play a role, in vitro, in the folding of actin and tubulin. The polypeptide is T-complex protein 1 subunit gamma (cct3) (Schizosaccharomyces pombe (strain 972 / ATCC 24843) (Fission yeast)).